A 463-amino-acid chain; its full sequence is Siroheme synthase (463 aa).

Residues 1–203 are precorrin-2 dehydrogenase /sirohydrochlorin ferrochelatase; it reads MDYLPLFHKL…GQGAEAERLL (203 aa). NAD(+) contacts are provided by residues 22 to 23 and 43 to 44; these read EI and PD. Ser128 is modified (phosphoserine). The uroporphyrinogen-III C-methyltransferase stretch occupies residues 216 to 463; sequence GEVYLVGAGP…LAWFEGSQNS (248 aa). Residue Pro225 participates in S-adenosyl-L-methionine binding. The Proton acceptor role is filled by Asp248. Lys270 functions as the Proton donor in the catalytic mechanism. S-adenosyl-L-methionine contacts are provided by residues 301–303, Ile306, 331–332, Met383, and Gly412; these read GGD and TA.

It in the N-terminal section; belongs to the precorrin-2 dehydrogenase / sirohydrochlorin ferrochelatase family. In the C-terminal section; belongs to the precorrin methyltransferase family.

It catalyses the reaction uroporphyrinogen III + 2 S-adenosyl-L-methionine = precorrin-2 + 2 S-adenosyl-L-homocysteine + H(+). The enzyme catalyses precorrin-2 + NAD(+) = sirohydrochlorin + NADH + 2 H(+). It carries out the reaction siroheme + 2 H(+) = sirohydrochlorin + Fe(2+). Its pathway is cofactor biosynthesis; adenosylcobalamin biosynthesis; precorrin-2 from uroporphyrinogen III: step 1/1. The protein operates within cofactor biosynthesis; adenosylcobalamin biosynthesis; sirohydrochlorin from precorrin-2: step 1/1. It functions in the pathway porphyrin-containing compound metabolism; siroheme biosynthesis; precorrin-2 from uroporphyrinogen III: step 1/1. It participates in porphyrin-containing compound metabolism; siroheme biosynthesis; siroheme from sirohydrochlorin: step 1/1. Its pathway is porphyrin-containing compound metabolism; siroheme biosynthesis; sirohydrochlorin from precorrin-2: step 1/1. Its function is as follows. Multifunctional enzyme that catalyzes the SAM-dependent methylations of uroporphyrinogen III at position C-2 and C-7 to form precorrin-2 via precorrin-1. Then it catalyzes the NAD-dependent ring dehydrogenation of precorrin-2 to yield sirohydrochlorin. Finally, it catalyzes the ferrochelation of sirohydrochlorin to yield siroheme. This chain is Siroheme synthase, found in Pseudomonas putida (strain ATCC 700007 / DSM 6899 / JCM 31910 / BCRC 17059 / LMG 24140 / F1).